The following is a 560-amino-acid chain: Alpha-keto-acid decarboxylase (560 aa).

Glu61 provides a ligand contact to thiamine diphosphate. The tract at residues 396–478 is thiamine pyrophosphate binding; the sequence is TSFYGMADHR…VVVNNDGYTV (83 aa). Mg(2+) is bound by residues Asp446, Asn473, and Gly475.

The protein belongs to the TPP enzyme family. It depends on a metal cation as a cofactor. Requires thiamine diphosphate as cofactor.

Decarboxylates branched-chain and aromatic alpha-keto acids to aldehydes. In Mycobacterium tuberculosis (strain CDC 1551 / Oshkosh), this protein is Alpha-keto-acid decarboxylase (kdc).